A 252-amino-acid polypeptide reads, in one-letter code: Diphthine synthase (252 aa).

S-adenosyl-L-methionine-binding positions include L9, D85, V88, 113-114 (SI), L165, A202, and H227.

It belongs to the diphthine synthase family. As to quaternary structure, homodimer.

The enzyme catalyses 2-[(3S)-amino-3-carboxypropyl]-L-histidyl-[translation elongation factor 2] + 3 S-adenosyl-L-methionine = diphthine-[translation elongation factor 2] + 3 S-adenosyl-L-homocysteine + 3 H(+). It functions in the pathway protein modification; peptidyl-diphthamide biosynthesis. Its function is as follows. S-adenosyl-L-methionine-dependent methyltransferase that catalyzes the trimethylation of the amino group of the modified target histidine residue in translation elongation factor 2 (EF-2), to form an intermediate called diphthine. The three successive methylation reactions represent the second step of diphthamide biosynthesis. The chain is Diphthine synthase from Methanospirillum hungatei JF-1 (strain ATCC 27890 / DSM 864 / NBRC 100397 / JF-1).